The sequence spans 474 residues: Gamma-aminobutyric acid receptor subunit gamma-2 (474 aa).

A signal peptide spans 1-38 (MSSPNTWSIGSSVYSPVFSQKMTLWILLLLSLYPGFTS). Topologically, residues 39–274 (QKSDDDYEDY…FDLSRRMGYF (236 aa)) are extracellular. Residues N51 and N128 are each glycosylated (N-linked (GlcNAc...) asparagine). A disulfide bond links C189 and C203. N246 carries an N-linked (GlcNAc...) asparagine glycan. The helical transmembrane segment at 275-295 (TIQTYIPCTLIVVLSWVSFWI) threads the bilayer. The Cytoplasmic segment spans residues 296–301 (NKDAVP). Residues 302–321 (ARTSLGITTVLTMTTLSTIA) form a helical membrane-spanning segment. Residues 322-333 (RKSLPKVSYVTA) are Extracellular-facing. A helical membrane pass occupies residues 334 to 358 (MDLFVSVCFIFVFSALVEYGTLHYF). Over 359 to 450 (VSNRKPSKDK…IHIRIAKMDS (92 aa)) the chain is Cytoplasmic. S381 bears the Phosphoserine; by PKC mark. The helical transmembrane segment at 451–472 (YARIFFPTAFCLFNLVYWVSYL) threads the bilayer. The Extracellular portion of the chain corresponds to 473-474 (YL).

The protein belongs to the ligand-gated ion channel (TC 1.A.9) family. Gamma-aminobutyric acid receptor (TC 1.A.9.5) subfamily. GABRG2 sub-subfamily. Heteropentamer, formed by a combination of alpha (GABRA1-6), beta (GABRB1-3), gamma (GABRG1-3), delta (GABRD), epsilon (GABRE), rho (GABRR1-3), pi (GABRP) and theta (GABRQ) chains, each subunit exhibiting distinct physiological and pharmacological properties. Interacts with GABARAP. Interacts with KIF21B. Identified in a complex of 720 kDa composed of LHFPL4, NLGN2, GABRA1, GABRB2, GABRG2 and GABRB3. Interacts with LHFPL4. Interacts with SHISA7; interaction leads to the regulation of GABA(A) receptor trafficking, channel deactivation kinetics and pharmacology. In terms of processing, glycosylated. Palmitoylated by ZDHHC3/GODZ; required for the accumulation of GABA(A) receptors at the postsynaptic membrane of inhibitory GABAergic synapses. In terms of tissue distribution, expressed in brain neurons (at protein level).

The protein resides in the postsynaptic cell membrane. Its subcellular location is the cell membrane. The protein localises to the cell projection. It is found in the dendrite. It localises to the cytoplasmic vesicle membrane. It catalyses the reaction chloride(in) = chloride(out). With respect to regulation, allosterically activated by benzodiazepines. Activated by pentobarbital. Inhibited by the antagonist bicuculline. Inhibited by zinc ions. Potentiated by histamine. Gamma subunit of the heteropentameric ligand-gated chloride channel gated by gamma-aminobutyric acid (GABA), a major inhibitory neurotransmitter in the brain. GABA-gated chloride channels, also named GABA(A) receptors (GABAAR), consist of five subunits arranged around a central pore and contain GABA active binding site(s) located at the alpha and beta subunit interface(s). When activated by GABA, GABAARs selectively allow the flow of chloride anions across the cell membrane down their electrochemical gradient. Gamma-2/GABRG2-containing GABAARs are found at both synaptic and extrasynaptic sites. Chloride influx into the postsynaptic neuron following GABAAR opening decreases the neuron ability to generate a new action potential, thereby reducing nerve transmission. GABAARs containing alpha-1 and beta-2 or -3 subunits exhibit synaptogenic activity; the gamma-2 subunit being necessary but not sufficient to induce rapid synaptic contacts formation. Extrasynaptic gamma-2-containing receptors contribute to the tonic GABAergic inhibition. GABAARs function also as histamine receptor where histamine binds at the interface of two neighboring beta subunits and potentiates GABA response in a gamma-2 subunit-controlled manner. This chain is Gamma-aminobutyric acid receptor subunit gamma-2, found in Mus musculus (Mouse).